The chain runs to 98 residues: Large ribosomal subunit protein uL23 (98 aa).

Belongs to the universal ribosomal protein uL23 family. Part of the 50S ribosomal subunit. Contacts protein L29, and trigger factor when it is bound to the ribosome.

Functionally, one of the early assembly proteins it binds 23S rRNA. One of the proteins that surrounds the polypeptide exit tunnel on the outside of the ribosome. Forms the main docking site for trigger factor binding to the ribosome. The protein is Large ribosomal subunit protein uL23 of Methylorubrum populi (strain ATCC BAA-705 / NCIMB 13946 / BJ001) (Methylobacterium populi).